A 281-amino-acid chain; its full sequence is MKYLEVTFTTHPCNETVNDVVSALAGEIGFESFVECEGGIQAYIQQTLFDEEALKEMVANFPLPDTRIEYTIKEAEDKNWNEEWEKNFFQPIVIGDRCCIHSTFHKDTPKTEYEILINPQMAFGTGHHETTSSIISELLEADLKGKSVLDMGCGTSILAILASMRGANPVTAIDIDDWCVNNSKDNIALNHIHNITVELGDANLLKGRKAFDVIIANINRNILLADLPHYAACMHPGSEIFMSGFYIQDIPFIREKAESLGMEFVHHREKNNWAAVKFIMK.

4 residues coordinate S-adenosyl-L-methionine: threonine 131, glycine 152, aspartate 174, and asparagine 217.

It belongs to the methyltransferase superfamily. PrmA family.

The protein resides in the cytoplasm. It catalyses the reaction L-lysyl-[protein] + 3 S-adenosyl-L-methionine = N(6),N(6),N(6)-trimethyl-L-lysyl-[protein] + 3 S-adenosyl-L-homocysteine + 3 H(+). Functionally, methylates ribosomal protein L11. This chain is Ribosomal protein L11 methyltransferase, found in Phocaeicola vulgatus (strain ATCC 8482 / DSM 1447 / JCM 5826 / CCUG 4940 / NBRC 14291 / NCTC 11154) (Bacteroides vulgatus).